The sequence spans 993 residues: Type II inositol 1,4,5-trisphosphate 5-phosphatase (993 aa).

A PH domain is found at 22 to 148 (QGVLCKGDSR…PEFEWLSRHT (127 aa)). Composition is skewed to basic and acidic residues over residues 149–163 (CAEP…REWN) and 294–303 (SKSDMSEKVR). Disordered stretches follow at residues 149–191 (CAEP…GLED) and 236–304 (EALE…KVRS). Residues 342-668 (IQNFRFFVGT…LDKMENANIP (327 aa)) are 5-phosphatase. 2 residues coordinate Mg(2+): Asn-355 and Glu-383. Residues Glu-383, 459–460 (NK), 582–583 (YK), and 596–598 (KCR) contribute to the substrate site. An ASH region spans residues 669–782 (SVTLSKREFC…LSVSGNYLPS (114 aa)). A Rho-GAP domain is found at 821–993 (SQLENPMEIP…FIHQFLCGPL (173 aa)). Cysteine methyl ester is present on Cys-990. Cys-990 carries the S-farnesyl cysteine lipid modification. A propeptide spans 991–993 (GPL) (removed in mature form).

It belongs to the inositol 1,4,5-trisphosphate 5-phosphatase type II family. In terms of assembly, interacts with APPL1, PHETA1 and PHETA2. Interacts with several Rab GTPases, at least RAB1A, RAB2A, RAB5A, RAB6A, RAB8A, RAB9A and RAB33B; these interactions may play a dual role in targeting INPP5B to the specific membranes and stimulating its phosphatase activity. Interacts preferentially with non-phosphorylated RAB8A; phosphorylation of RAB8A on 'Thr-72' disrupts this interaction. Interacts with INPP5F. In terms of processing, isoprenylation at Cys-990 may be required for localization at the membrane. Post-translationally, may be proteolytically cleaved after Lys-320 as inferred from N-terminal protein sequence of the 75 kda form. In terms of tissue distribution, detected in kidney, liver, brain, lung and testis (at protein level). Detected in kidney and liver, and at lower levels in brain, lung and testis.

The protein localises to the cytoplasm. The protein resides in the cytosol. It is found in the endoplasmic reticulum-Golgi intermediate compartment. Its subcellular location is the early endosome membrane. It localises to the membrane. The protein localises to the cytoplasmic vesicle. The protein resides in the phagosome membrane. It carries out the reaction a 1,2-diacyl-sn-glycero-3-phospho-(1D-myo-inositol-4,5-bisphosphate) + H2O = a 1,2-diacyl-sn-glycero-3-phospho-(1D-myo-inositol 4-phosphate) + phosphate. In terms of biological role, hydrolyzes phosphatidylinositol 4,5-bisphosphate (PtIns(4,5)P2) and the signaling molecule phosphatidylinositol 1,4,5-trisphosphate (PtIns(1,4,5)P3), and thereby modulates cellular signaling events. This is Type II inositol 1,4,5-trisphosphate 5-phosphatase (Inpp5b) from Mus musculus (Mouse).